The primary structure comprises 300 residues: Vetispiradiene synthase 2 (300 aa).

Mg(2+)-binding residues include Asp-54, Asp-58, Asp-197, Thr-201, and Glu-205. Positions 54-58 match the DDXXD motif motif; it reads DDTFD.

This sequence belongs to the terpene synthase family. Tpsa subfamily. Mg(2+) is required as a cofactor.

The protein localises to the cytoplasm. It carries out the reaction (2E,6E)-farnesyl diphosphate = (-)-vetispiradiene + diphosphate. It participates in secondary metabolite biosynthesis; terpenoid biosynthesis. Functionally, sesquiterpene synthase that catalyzes the formation of vetispiradiene from trans,trans-farnesyl diphosphate. The initial internal cyclization produces the monocyclic intermediate germacrene A. The polypeptide is Vetispiradiene synthase 2 (Hyoscyamus muticus (Egyptian henbane)).